The sequence spans 187 residues: MMNVDLDKIQQAVRMILEAVGDDPDREGVLDTPKRVAKMYAEVFEGMHIDEEQYFETVFSEDHEEMVLVKDIPFYSMCEHHLVPFFGKAHVAYVPRGGRVVGLSKLARAVDTVAKRPQLQERITATVADSIMRKLDPHGVVVVVEAEHMCMTMRGVKKPGSKTITSAVRGMFEKDAAARAEVISLMR.

Residues C78, H81, and C150 each contribute to the Zn(2+) site.

Belongs to the GTP cyclohydrolase I family. In terms of assembly, homomer.

The catalysed reaction is GTP + H2O = 7,8-dihydroneopterin 3'-triphosphate + formate + H(+). Its pathway is cofactor biosynthesis; 7,8-dihydroneopterin triphosphate biosynthesis; 7,8-dihydroneopterin triphosphate from GTP: step 1/1. The sequence is that of GTP cyclohydrolase 1 from Brevibacillus brevis (strain 47 / JCM 6285 / NBRC 100599).